The sequence spans 49 residues: uncharacterized protein (49 aa).

This sequence belongs to the ELIP/psbS family.

It is found in the plastid. It localises to the cyanelle. In terms of biological role, possible role in chlorophyll and/or carotenoid binding. This is an uncharacterized protein from Cyanophora paradoxa.